Here is a 199-residue protein sequence, read N- to C-terminus: UPF0301 protein Daci_1578 (199 aa).

It belongs to the UPF0301 (AlgH) family.

The polypeptide is UPF0301 protein Daci_1578 (Delftia acidovorans (strain DSM 14801 / SPH-1)).